A 620-amino-acid polypeptide reads, in one-letter code: MLSRVARNSSLLKQLPKLRQTTVLPVVLKNSIRFHATSSENKEIFTKLTDSKDPQRNQFFQYTWGSWLKNDKLNKKKRETVFSIEGLTLFLDTIKGFETTLSQPKHLHGSFVLGQNKDLLGEAEDKIILRSIASIHEGKHHRIYKLTLNTGRDLVLRIPYKLDSDAAIAAKIKSEVATLDFLNLKLGLKVPRVLSYGSDVYNEVGSPYILEEFIPGDLLMRKWHPLSPDSEETNKALHEVIDPIAEFQDKLLSVTFNKFGSLYFHDDVEGSLQNDLPYDGETNEDLKNRWRIGPSVERQFSKNKEKLPQNLIDELNGPWDASNPIALMESVADIELENAKNKLALINADAGANENDKDLINKQIKTFEHLKKITPLLINTKSKSIMNVEELFKPRLYIPDLDPLNVIQQGKDVNYFIDFEGSTIKPFILTGYPKFVAYEGAKIYNLEEDIPGYNELDELEKEQYAFMYYKTRNERMWEFELNKHRHDLIAVASPHIKVIKSPYLQALDLKTDNDHLYVEGSIVQLQALWEAYVANELVNSKDSKFPIEYTAEYLDQHQQDLSDHQLETVSSPFSATGGWIPQDMFNTLKDQGIIVETEDGNYKIETEKVLENPPKPEEKN.

The N-terminal 35 residues, 1-35 (MLSRVARNSSLLKQLPKLRQTTVLPVVLKNSIRFH), are a transit peptide targeting the mitochondrion.

It belongs to the AIM9 family.

The protein resides in the mitochondrion. In Candida tropicalis (strain ATCC MYA-3404 / T1) (Yeast), this protein is Altered inheritance of mitochondria protein 9, mitochondrial (AIM9).